Here is a 128-residue protein sequence, read N- to C-terminus: uncharacterized protein (128 aa).

Residues 24–43 (KRTQNNTEQASRAINSPLQS) are disordered. The segment covering 26 to 43 (TQNNTEQASRAINSPLQS) has biased composition (polar residues).

This is an uncharacterized protein from Homo sapiens (Human).